The sequence spans 150 residues: Heat shock protein beta-3 (150 aa).

Residues 47–150 (KTRAAQSPPV…VEVKDPVGTK (104 aa)) form the sHSP domain.

The protein belongs to the small heat shock protein (HSP20) family.

The protein localises to the cytoplasm. The protein resides in the nucleus. Inhibitor of actin polymerization. The polypeptide is Heat shock protein beta-3 (HSPB3) (Homo sapiens (Human)).